A 2641-amino-acid chain; its full sequence is Inverse autotransporter adhesin YeeJ (2641 aa).

The first 25 residues, 1 to 25 (MGIKLRRLTAGICLITQLVFPMAAA), serve as a signal peptide directing secretion. The 49-residue stretch at 50-98 (VPYTLGALESAQSVAERFGISVAELRKLNQFRTFARGFDNVRQGDELDV) folds into the LysM domain. The segment at 125–400 (TSQQIGSLLA…SRFDLVDRNN (276 aa)) is inverse autotransporter. The segment at 513 to 605 (QKDSSVSLSS…GVDAAKAPAV (93 aa)) is invasin 3 domain. 17 Big-1 domains span residues 617–711 (HSSI…AGFI), 721–815 (IATL…VSFV), 822–913 (QVDL…VIFI), 920–1017 (ALTL…MTFV), 1024–1116 (VVVL…VNIA), 1123–1220 (QVTL…VTFV), 1227–1319 (VVVL…VNIA), 1326–1423 (QVTL…VTFV), 1430–1523 (LVVL…VHFI), 1531–1633 (IIEL…SINV), 1641–1734 (HLTL…VTYV), 1741–1837 (EISL…VNFI), 1844–1941 (QVNL…VTLI), 1948–2032 (KLAS…PTEV), 2048–2141 (ITSL…VIDQ), 2142–2235 (KLTL…IVKV), and 2244–2336 (VASF…ITLV). The interval 2538-2641 (KSWWVNAGDA…FAYATCYKNL (104 aa)) is C-type lectin domain.

The protein belongs to the intimin/invasin family.

It is found in the cell outer membrane. A probable inverse autotransporter, it may be involved in biofilm formation and cell adhesion. May bind peptidoglycan via its LysM domain. The chain is Inverse autotransporter adhesin YeeJ (yeeJ) from Escherichia coli O157:H7.